Here is a 344-residue protein sequence, read N- to C-terminus: Holliday junction branch migration complex subunit RuvB (344 aa).

Residues Met1–Tyr181 are large ATPase domain (RuvB-L). ATP contacts are provided by residues Leu20, Arg21, Gly62, Lys65, Thr66, Thr67, Glu128–Tyr130, Arg171, Tyr181, and Arg218. A Mg(2+)-binding site is contributed by Thr66. A small ATPAse domain (RuvB-S) region spans residues Asp182–Glu252. The head domain (RuvB-H) stretch occupies residues Asn255 to Lys344. Arg310 and Arg315 together coordinate DNA.

Belongs to the RuvB family. As to quaternary structure, homohexamer. Forms an RuvA(8)-RuvB(12)-Holliday junction (HJ) complex. HJ DNA is sandwiched between 2 RuvA tetramers; dsDNA enters through RuvA and exits via RuvB. An RuvB hexamer assembles on each DNA strand where it exits the tetramer. Each RuvB hexamer is contacted by two RuvA subunits (via domain III) on 2 adjacent RuvB subunits; this complex drives branch migration. In the full resolvosome a probable DNA-RuvA(4)-RuvB(12)-RuvC(2) complex forms which resolves the HJ.

The protein resides in the cytoplasm. It catalyses the reaction ATP + H2O = ADP + phosphate + H(+). Its function is as follows. The RuvA-RuvB-RuvC complex processes Holliday junction (HJ) DNA during genetic recombination and DNA repair, while the RuvA-RuvB complex plays an important role in the rescue of blocked DNA replication forks via replication fork reversal (RFR). RuvA specifically binds to HJ cruciform DNA, conferring on it an open structure. The RuvB hexamer acts as an ATP-dependent pump, pulling dsDNA into and through the RuvAB complex. RuvB forms 2 homohexamers on either side of HJ DNA bound by 1 or 2 RuvA tetramers; 4 subunits per hexamer contact DNA at a time. Coordinated motions by a converter formed by DNA-disengaged RuvB subunits stimulates ATP hydrolysis and nucleotide exchange. Immobilization of the converter enables RuvB to convert the ATP-contained energy into a lever motion, pulling 2 nucleotides of DNA out of the RuvA tetramer per ATP hydrolyzed, thus driving DNA branch migration. The RuvB motors rotate together with the DNA substrate, which together with the progressing nucleotide cycle form the mechanistic basis for DNA recombination by continuous HJ branch migration. Branch migration allows RuvC to scan DNA until it finds its consensus sequence, where it cleaves and resolves cruciform DNA. The protein is Holliday junction branch migration complex subunit RuvB of Clostridium botulinum (strain Eklund 17B / Type B).